Reading from the N-terminus, the 341-residue chain is S-adenosylmethionine:tRNA ribosyltransferase-isomerase (341 aa).

Belongs to the QueA family. Monomer.

It localises to the cytoplasm. It carries out the reaction 7-aminomethyl-7-carbaguanosine(34) in tRNA + S-adenosyl-L-methionine = epoxyqueuosine(34) in tRNA + adenine + L-methionine + 2 H(+). Its pathway is tRNA modification; tRNA-queuosine biosynthesis. Functionally, transfers and isomerizes the ribose moiety from AdoMet to the 7-aminomethyl group of 7-deazaguanine (preQ1-tRNA) to give epoxyqueuosine (oQ-tRNA). The sequence is that of S-adenosylmethionine:tRNA ribosyltransferase-isomerase from Pelotomaculum thermopropionicum (strain DSM 13744 / JCM 10971 / SI).